The chain runs to 110 residues: Secreted RxLR effector protein 89 (110 aa).

Positions 1–22 (MTSVVIVVSVAVLLGVLVITDS) are cleaved as a signal peptide. N-linked (GlcNAc...) asparagine glycosylation is present at asparagine 29. The RxLR-dEER signature appears at 61 to 74 (RHLRTILQWWQERR).

This sequence belongs to the RxLR effector family.

Its subcellular location is the secreted. It is found in the host nucleus. The protein localises to the host cytoplasm. Its function is as follows. Secreted effector that completely suppresses the host cell death induced by cell death-inducing proteins. The polypeptide is Secreted RxLR effector protein 89 (Plasmopara viticola (Downy mildew of grapevine)).